The primary structure comprises 290 residues: Shikimate dehydrogenase (NADP(+)) (290 aa).

Shikimate is bound by residues 18-20 and Thr-66; that span reads SYS. Residue Lys-70 is the Proton acceptor of the active site. Residues Asn-91 and Asp-106 each contribute to the shikimate site. NADP(+) contacts are provided by residues 130 to 134 and Met-230; that span reads GNGGA. Tyr-232 contacts shikimate. Gly-253 contacts NADP(+).

Belongs to the shikimate dehydrogenase family. As to quaternary structure, homodimer.

It catalyses the reaction shikimate + NADP(+) = 3-dehydroshikimate + NADPH + H(+). It participates in metabolic intermediate biosynthesis; chorismate biosynthesis; chorismate from D-erythrose 4-phosphate and phosphoenolpyruvate: step 4/7. Involved in the biosynthesis of the chorismate, which leads to the biosynthesis of aromatic amino acids. Catalyzes the reversible NADPH linked reduction of 3-dehydroshikimate (DHSA) to yield shikimate (SA). The chain is Shikimate dehydrogenase (NADP(+)) from Prosthecochloris aestuarii (strain DSM 271 / SK 413).